Consider the following 384-residue polypeptide: Putative D-galactosamine-6-phosphate deaminase AgaS (384 aa).

SIS domains lie at Leu45 to Phe197 and Ser215 to Pro364.

Belongs to the SIS family. AgaS subfamily.

The enzyme catalyses D-galactosamine 6-phosphate + H2O = D-tagatopyranose 1-phosphate + NH4(+). Its function is as follows. Catalyzes the isomerization-deamination of galactosamine 6-phosphate to form tagatofuranose 6-phosphate and ammonium ion. The chain is Putative D-galactosamine-6-phosphate deaminase AgaS (agaS) from Escherichia coli (strain K12).